Reading from the N-terminus, the 60-residue chain is UPF0434 protein YcaR (60 aa).

It belongs to the UPF0434 family.

This chain is UPF0434 protein YcaR, found in Escherichia fergusonii (strain ATCC 35469 / DSM 13698 / CCUG 18766 / IAM 14443 / JCM 21226 / LMG 7866 / NBRC 102419 / NCTC 12128 / CDC 0568-73).